The sequence spans 138 residues: Histone H2AX (138 aa).

The disordered stretch occupies residues 1–23; it reads MSTTGKGGKAKGKTASSKQVSRS. Ser-2 bears the N-acetylserine mark. N6-acetyllysine occurs at positions 6, 9, 11, 13, and 18. Ser-123 is modified (phosphoserine). A Glycyl lysine isopeptide (Lys-Gly) (interchain with G-Cter in ubiquitin) cross-link involves residue Lys-124. A phosphoserine mark is found at Ser-125, Ser-130, and Ser-135. The short motif at 135-136 is the [ST]-Q motif element; it reads SQ.

Belongs to the histone H2A family. In terms of assembly, the nucleosome is a histone octamer containing two molecules each of H2A, H2B, H3 and H4 assembled in one H3-H4 heterotetramer and two H2A-H2B heterodimers. The octamer wraps approximately 147 bp of DNA. Monoubiquitination of Lys-124 gives a specific tag for epigenetic transcriptional repression. In terms of processing, acetylation occurs almost exclusively in the MAC.

The protein localises to the nucleus. It is found in the chromosome. In terms of biological role, core component of nucleosome. Nucleosomes wrap and compact DNA into chromatin, limiting DNA accessibility to the cellular machineries which require DNA as a template. Histones thereby play a central role in transcription regulation, DNA repair, DNA replication and chromosomal stability. DNA accessibility is regulated via a complex set of post-translational modifications of histones, also called histone code, and nucleosome remodeling. The polypeptide is Histone H2AX (HTA1) (Tetrahymena pyriformis).